The chain runs to 346 residues: uncharacterized protein (346 aa).

Residues 7–27 traverse the membrane as a helical segment; the sequence is AMVILLIICGTYVLFIQYGSV. A disordered region spans residues 29–48; the sequence is EKKSNDSEPQVSNEEAQSGK. Residues 35-44 are compositionally biased toward polar residues; it reads SEPQVSNEEA. The 112-residue stretch at 231–342 folds into the SCP domain; it reads LDLTNVIRVK…VDRKYYTQNF (112 aa).

The protein resides in the cell membrane. This is an uncharacterized protein from Bacillus subtilis (strain 168).